Reading from the N-terminus, the 467-residue chain is MEHTEPEKTDLKSVDLIEMEDTEKLIGTKRKFTDVPIVFRPKKKRVIIEYEPNTLDIPVSDQESFLKLSAPYITQLYSAPNVTEYTLRDFFVRDKIMPGLIQIQEKMFNIKKTSIRPCYICKRPMTKVHWFYLYQCNECGNESLKYRYASRNLYGKNALVIGGRIKLGYQIALKLLRAGCRVMITTRSVHNALEFYNQEPDYNEFKSRLFVYSKGFDLGKARESLPDLVNEITNLFGQQQLDILIQNAAQTICFQENIDNKQQEFESLSEAEILDLVKKRGGKRLTFPPVDWRVDFAERYGRVLDRRSINTWSKNIYETSDEEIISVIQSNMIGSILIDKYLIPNMRPSEDTYVIHVHAKEGTFDTHKTMKHTHTNIAKAGLAMLTRCLAGQSENDTEPRSQWPQIHGVNPGWFSIDEYTIYARTRGKIFNPPIDEIDAASRVVHPIFFQKKSYCKSWIDYKKCHHF.

This is an uncharacterized protein from Acanthamoeba polyphaga (Amoeba).